Reading from the N-terminus, the 515-residue chain is Maturase K (515 aa).

The protein belongs to the intron maturase 2 family. MatK subfamily.

The protein resides in the plastid. It localises to the chloroplast. Functionally, usually encoded in the trnK tRNA gene intron. Probably assists in splicing its own and other chloroplast group II introns. In Pinus koraiensis (Korean pine), this protein is Maturase K.